A 410-amino-acid polypeptide reads, in one-letter code: ACT domain-containing protein ACR10 (410 aa).

ACT domains follow at residues 22-105 (VITI…SESQ), 114-197 (LLKL…LVGP), and 245-324 (LIHI…VVMM).

Functionally, may bind amino acids. The sequence is that of ACT domain-containing protein ACR10 from Arabidopsis thaliana (Mouse-ear cress).